The primary structure comprises 419 residues: Carbohydrate sulfotransferase 12 (419 aa).

The Cytoplasmic portion of the chain corresponds to 1 to 5 (MTKPR). Residues 6–26 (LFRLWLVLGSALMILLIIVYW) traverse the membrane as a helical; Signal-anchor for type II membrane protein segment. Residues 27 to 419 (DNVGTAHFYL…YPKPENLLRD (393 aa)) lie on the Lumenal side of the membrane. The span at 78-87 (HNDLSRRKTE) shows a compositional bias: basic and acidic residues. The interval 78 to 99 (HNDLSRRKTEQPPVPAPSKPVL) is disordered. N139 carries N-linked (GlcNAc...) asparagine glycosylation. Position 176 to 182 (176 to 182 (PKVACTN)) interacts with 3'-phosphoadenylyl sulfate. N214 carries an N-linked (GlcNAc...) asparagine glycan. 250–258 (RDPFVRLIS) is a binding site for 3'-phosphoadenylyl sulfate. N285 and N375 each carry an N-linked (GlcNAc...) asparagine glycan.

The protein belongs to the sulfotransferase 2 family.

Its subcellular location is the golgi apparatus membrane. It catalyses the reaction chondroitin beta-D-glucuronate + n 3'-phosphoadenylyl sulfate = chondroitin 4'-sulfate + n adenosine 3',5'-bisphosphate + n H(+). Catalyzes the transfer of sulfate to position 4 of the N-acetylgalactosamine (GalNAc) residue of chondroitin and desulfated dermatan sulfate. Chondroitin sulfate constitutes the predominant proteoglycan present in cartilage and is distributed on the surfaces of many cells and extracellular matrices. Activity toward partially desulfated dermatan sulfate is however lower. Does not form 4, 6-di-O-sulfated GalNAc when chondroitin sulfate C is used as an acceptor. The sequence is that of Carbohydrate sulfotransferase 12 (Chst12) from Mus musculus (Mouse).